The chain runs to 434 residues: Enolase (434 aa).

Gln163 is a binding site for (2R)-2-phosphoglycerate. Residue Glu205 is the Proton donor of the active site. Mg(2+)-binding residues include Asp242, Glu291, and Asp318. Residues Lys343, Arg372, Ser373, and Lys394 each coordinate (2R)-2-phosphoglycerate. Lys343 (proton acceptor) is an active-site residue.

It belongs to the enolase family. Mg(2+) is required as a cofactor.

The protein localises to the cytoplasm. Its subcellular location is the secreted. It is found in the cell surface. The enzyme catalyses (2R)-2-phosphoglycerate = phosphoenolpyruvate + H2O. It participates in carbohydrate degradation; glycolysis; pyruvate from D-glyceraldehyde 3-phosphate: step 4/5. In terms of biological role, catalyzes the reversible conversion of 2-phosphoglycerate (2-PG) into phosphoenolpyruvate (PEP). It is essential for the degradation of carbohydrates via glycolysis. In Streptococcus sanguinis (strain SK36), this protein is Enolase.